Consider the following 263-residue polypeptide: H-2 class II histocompatibility antigen, A-S beta chain (263 aa).

The signal sequence occupies residues 1–27 (MALQIPSLLLSAAVVVLMVLSSPGTEG). A beta-1 region spans residues 28–120 (GDSERHFVFQ…VETHTSLRRL (93 aa)). Residues 28–224 (GDSERHFVFQ…RAQSESARSK (197 aa)) lie on the Extracellular side of the membrane. 2 disulfides stabilise this stretch: C42–C104 and C143–C199. N46 carries an N-linked (GlcNAc...) asparagine glycan. The interval 121–214 (EQPNVVISLS…SLKSPITVEW (94 aa)) is beta-2. The Ig-like C1-type domain occupies 123–211 (PNVVISLSRT…EHPSLKSPIT (89 aa)). The connecting peptide stretch occupies residues 215–224 (RAQSESARSK). A helical transmembrane segment spans residues 225–245 (MLSGIGGCVLGVIFLGLGLFI). The Cytoplasmic segment spans residues 246–263 (RHRSQKGPRGPPPAGLLQ).

This sequence belongs to the MHC class II family. Post-translationally, ubiquitinated in immature dendritic cells leading to down-regulation of MHC class II.

The protein localises to the membrane. The sequence is that of H-2 class II histocompatibility antigen, A-S beta chain (H2-Ab1) from Mus musculus (Mouse).